A 159-amino-acid chain; its full sequence is Dihydrofolate reductase (159 aa).

The DHFR domain maps to 1–158 (MISLIAALAV…HSYCFEILER (158 aa)). Residue I5 coordinates substrate. NADP(+) contacts are provided by residues A7 and 13-19 (VIGMENA). Residue D27 coordinates substrate. 45–46 (LT) is a binding site for NADP(+). Positions 52 and 57 each coordinate substrate. NADP(+) contacts are provided by residues 63–64 (SS), K76, and 95–102 (GGGRVYEQ). Substrate is bound at residue T113.

The protein belongs to the dihydrofolate reductase family.

The catalysed reaction is (6S)-5,6,7,8-tetrahydrofolate + NADP(+) = 7,8-dihydrofolate + NADPH + H(+). It participates in cofactor biosynthesis; tetrahydrofolate biosynthesis; 5,6,7,8-tetrahydrofolate from 7,8-dihydrofolate: step 1/1. Its function is as follows. Key enzyme in folate metabolism. Catalyzes an essential reaction for de novo glycine and purine synthesis, and for DNA precursor synthesis. This chain is Dihydrofolate reductase (folA), found in Klebsiella aerogenes (Enterobacter aerogenes).